A 173-amino-acid chain; its full sequence is 6,7-dimethyl-8-ribityllumazine synthase (173 aa).

Residues F24, 58–60, and 82–84 each bind 5-amino-6-(D-ribitylamino)uracil; these read ALE and AVI. A (2S)-2-hydroxy-3-oxobutyl phosphate-binding site is contributed by 87 to 88; that stretch reads ET. H90 functions as the Proton donor in the catalytic mechanism. Position 115 (N115) interacts with 5-amino-6-(D-ribitylamino)uracil. R129 is a (2S)-2-hydroxy-3-oxobutyl phosphate binding site. The interval 150–173 is disordered; the sequence is TLDQLSDDEEDEEDEDDEDEEERA. Positions 154–173 are enriched in acidic residues; it reads LSDDEEDEEDEDDEDEEERA.

This sequence belongs to the DMRL synthase family.

The catalysed reaction is (2S)-2-hydroxy-3-oxobutyl phosphate + 5-amino-6-(D-ribitylamino)uracil = 6,7-dimethyl-8-(1-D-ribityl)lumazine + phosphate + 2 H2O + H(+). It functions in the pathway cofactor biosynthesis; riboflavin biosynthesis; riboflavin from 2-hydroxy-3-oxobutyl phosphate and 5-amino-6-(D-ribitylamino)uracil: step 1/2. Catalyzes the formation of 6,7-dimethyl-8-ribityllumazine by condensation of 5-amino-6-(D-ribitylamino)uracil with 3,4-dihydroxy-2-butanone 4-phosphate. This is the penultimate step in the biosynthesis of riboflavin. The chain is 6,7-dimethyl-8-ribityllumazine synthase from Burkholderia mallei (strain NCTC 10247).